The primary structure comprises 276 residues: Flagellin FljJ (276 aa).

Positions 51–80 are disordered; it reads RPGAGDMSGLAREDEPGSGDIDRGRGPRAG. Positions 61–75 are enriched in basic and acidic residues; it reads AREDEPGSGDIDRGR.

Belongs to the bacterial flagellin family. In terms of assembly, in C.crescentus, the flagellar filament is composed of multiple flagellins of 29 kDa; 27 kDa and 25 kDa.

The protein localises to the secreted. The protein resides in the bacterial flagellum. Functionally, flagellin is the subunit protein which polymerizes to form the filaments of bacterial flagella. This is Flagellin FljJ (fljJ) from Caulobacter vibrioides (strain ATCC 19089 / CIP 103742 / CB 15) (Caulobacter crescentus).